The following is a 336-amino-acid chain: Tryptophan--tRNA ligase (336 aa).

ATP-binding positions include 16 to 18 (QPT) and 24 to 25 (GN). Residues 17–25 (PTGQLHLGN) carry the 'HIGH' region motif. Aspartate 140 is a binding site for L-tryptophan. ATP contacts are provided by residues 152-154 (GED), valine 191, and 200-204 (KMSKS). The 'KMSKS' region signature appears at 200 to 204 (KMSKS).

The protein belongs to the class-I aminoacyl-tRNA synthetase family. In terms of assembly, homodimer.

It is found in the cytoplasm. The enzyme catalyses tRNA(Trp) + L-tryptophan + ATP = L-tryptophyl-tRNA(Trp) + AMP + diphosphate + H(+). In terms of biological role, catalyzes the attachment of tryptophan to tRNA(Trp). The sequence is that of Tryptophan--tRNA ligase from Gloeobacter violaceus (strain ATCC 29082 / PCC 7421).